The following is a 55-amino-acid chain: ATP synthase F(0) complex subunit 8 (55 aa).

A helical transmembrane segment spans residues phenylalanine 10–leucine 30. The disordered stretch occupies residues asparagine 35–threonine 55. Residues proline 37–threonine 55 are compositionally biased toward low complexity.

This sequence belongs to the ATPase protein 8 family. In terms of assembly, component of the ATP synthase complex composed at least of ATP5F1A/subunit alpha, ATP5F1B/subunit beta, ATP5MC1/subunit c (homooctomer), MT-ATP6/subunit a, MT-ATP8/subunit 8, ATP5ME/subunit e, ATP5MF/subunit f, ATP5MG/subunit g, ATP5MK/subunit k, ATP5MJ/subunit j, ATP5F1C/subunit gamma, ATP5F1D/subunit delta, ATP5F1E/subunit epsilon, ATP5PF/subunit F6, ATP5PB/subunit b, ATP5PD/subunit d, ATP5PO/subunit OSCP. ATP synthase complex consists of a soluble F(1) head domain (subunits alpha(3) and beta(3)) - the catalytic core - and a membrane F(0) domain - the membrane proton channel (subunits c, a, 8, e, f, g, k and j). These two domains are linked by a central stalk (subunits gamma, delta, and epsilon) rotating inside the F1 region and a stationary peripheral stalk (subunits F6, b, d, and OSCP).

It localises to the mitochondrion membrane. Its function is as follows. Subunit 8, of the mitochondrial membrane ATP synthase complex (F(1)F(0) ATP synthase or Complex V) that produces ATP from ADP in the presence of a proton gradient across the membrane which is generated by electron transport complexes of the respiratory chain. ATP synthase complex consist of a soluble F(1) head domain - the catalytic core - and a membrane F(1) domain - the membrane proton channel. These two domains are linked by a central stalk rotating inside the F(1) region and a stationary peripheral stalk. During catalysis, ATP synthesis in the catalytic domain of F(1) is coupled via a rotary mechanism of the central stalk subunits to proton translocation. In vivo, can only synthesize ATP although its ATP hydrolase activity can be activated artificially in vitro. Part of the complex F(0) domain. The polypeptide is ATP synthase F(0) complex subunit 8 (Opisthocomus hoazin (Hoatzin)).